A 209-amino-acid chain; its full sequence is Chaperone protein TorD (209 aa).

It belongs to the TorD/DmsD family. TorD subfamily.

The protein localises to the cytoplasm. Involved in the biogenesis of TorA. Acts on TorA before the insertion of the molybdenum cofactor and, as a result, probably favors a conformation of the apoenzyme that is competent for acquiring the cofactor. This chain is Chaperone protein TorD, found in Shewanella baltica (strain OS155 / ATCC BAA-1091).